The primary structure comprises 674 residues: MVQFLGKQGTAGELIHMVTLDKTGKKSFGICIVRGEVKDSPNTKTTGIFIKGIVPDSPAHLCGRLKVGDRILSLNGKDVRNSTEQAVIDLIKEADFKIELEIQTFDKSDEQQAKSDPRSNGYMQAKNKFNQEQTTNNNASGGQGMGQGQGQGQGMAGMNRQQSMQKRNTTFTASMRQKHSNYADEDDEDTRDMTGRIRTEAGYEIDRASAGNCKLNKQEKDRDKEQEDEFGYTMAKINKRYNMMKDLRRIEVQRDASKPLGLALAGHKDRQKMACFVAGVDPNGALGSVDIKPGDEIVEVNGNVLKNRCHLNASAVFKNVDGDKLVMITSRRKPNDEGMCVKPIKKFPTASDETKFIFDQFPKARTVQVRKEGFLGIMVIYGKHAEVGSGIFISDLREGSNAELAGVKVGDMLLAVNQDVTLESNYDDATGLLKRAEGVVTMILLTLKSEEAIKAEKAAEEKKKEEAKKEEEKPQEPATAEIKPNKKILIELKVEKKPMGVIVCGGKNNHVTTGCVITHVYPEGQVAADKRLKIFDHICDINGTPIHVGSMTTLKVHQLFHTTYEKAVTLTVFRADPPELEKFNVDLMKKAGKELGLSLSPNEIGCTIADLIQGQYPEIDSKLQRGDIITKFNGDALEGLPFQVCYALFKGANGKVSMEVTRPKPTLRTEAPKA.

The region spanning 17 to 106 (MVTLDKTGKK…KIELEIQTFD (90 aa)) is the PDZ 1 domain. The tract at residues 133–192 (QTTNNNASGGQGMGQGQGQGQGMAGMNRQQSMQKRNTTFTASMRQKHSNYADEDDEDTRD) is disordered. The segment covering 141–155 (GGQGMGQGQGQGQGM) has biased composition (gly residues). A compositionally biased stretch (polar residues) spans 159 to 175 (NRQQSMQKRNTTFTASM). PDZ domains follow at residues 249–332 (RIEV…TSRR) and 364–448 (ARTV…LTLK). Over residues 458–475 (AAEEKKKEEAKKEEEKPQ) the composition is skewed to basic and acidic residues. A disordered region spans residues 458-481 (AAEEKKKEEAKKEEEKPQEPATAE). 2 PDZ domains span residues 489-577 (LIEL…RADP) and 584-664 (NVDL…TRPK). S598 and S600 each carry phosphoserine.

As to quaternary structure, interacts with the C-terminus of trp, and with norpA and inaC to form the inaD signaling complex. Interacts with Fkbp59, which together with trpl, rhodopsin and calmodulin may also be part of the inaD complex. Phosphorylated by inaC. As to expression, expressed in photoreceptor cells (R cells) of the compound eyes and ocelli.

The protein localises to the cell projection. The protein resides in the rhabdomere. Functionally, involved in the negative feedback regulation of the light-activated signaling cascade in photoreceptors through a calcium-mediated process. Interacts with tetrapeptide ligand located in C-terminal sequence of 3 key components of the visual cascade, tethering them and forming a macromolecular signaling phototransduction complex. This chain is Inactivation-no-after-potential D protein (inaD), found in Drosophila melanogaster (Fruit fly).